A 299-amino-acid polypeptide reads, in one-letter code: Protoheme IX farnesyltransferase (299 aa).

A run of 9 helical transmembrane segments spans residues 27-47 (VVAL…HEHF), 53-73 (LIAL…NHLI), 97-117 (FNVL…LMLW), 121-141 (LTAY…TLYL), 149-169 (IVIA…SITG), 175-195 (AWVL…ALAI), 222-242 (ILLY…VGMA), 244-264 (YLYL…AIKL), and 273-293 (AIEM…ALLL).

It belongs to the UbiA prenyltransferase family. Protoheme IX farnesyltransferase subfamily.

The protein resides in the cell inner membrane. It carries out the reaction heme b + (2E,6E)-farnesyl diphosphate + H2O = Fe(II)-heme o + diphosphate. It participates in porphyrin-containing compound metabolism; heme O biosynthesis; heme O from protoheme: step 1/1. In terms of biological role, converts heme B (protoheme IX) to heme O by substitution of the vinyl group on carbon 2 of heme B porphyrin ring with a hydroxyethyl farnesyl side group. The chain is Protoheme IX farnesyltransferase from Vibrio vulnificus (strain CMCP6).